The following is a 150-amino-acid chain: Protein SLM6 (150 aa).

The Extracellular portion of the chain corresponds to 1-76 (MCSRFSSTSL…SLLRSGVFPS (76 aa)). A helical transmembrane segment spans residues 77 to 97 (WLFCMFSSILALAISNSFFFF). The Cytoplasmic segment spans residues 98 to 104 (SSNACFS). A helical transmembrane segment spans residues 105–125 (LLFNSFLVTGFSFSADLLVLA). Over 126-150 (AAADTLESNVSNDIGGNCATRLFKL) the chain is Extracellular.

Its subcellular location is the membrane. This is Protein SLM6 from Saccharomyces cerevisiae (strain ATCC 204508 / S288c) (Baker's yeast).